The chain runs to 190 residues: Ribose 1,5-bisphosphate phosphokinase PhnN (190 aa).

Residues 135 to 159 (RGREPEPGIGQRLARPDPAPGHQAD) form a disordered region.

This sequence belongs to the ribose 1,5-bisphosphokinase family.

It carries out the reaction alpha-D-ribose 1,5-bisphosphate + ATP = 5-phospho-alpha-D-ribose 1-diphosphate + ADP. It functions in the pathway metabolic intermediate biosynthesis; 5-phospho-alpha-D-ribose 1-diphosphate biosynthesis; 5-phospho-alpha-D-ribose 1-diphosphate from D-ribose 5-phosphate (route II): step 3/3. In terms of biological role, catalyzes the phosphorylation of ribose 1,5-bisphosphate to 5-phospho-D-ribosyl alpha-1-diphosphate (PRPP). This is Ribose 1,5-bisphosphate phosphokinase PhnN from Pseudofrankia inefficax (strain DSM 45817 / CECT 9037 / DDB 130130 / EuI1c) (Frankia inefficax).